A 101-amino-acid chain; its full sequence is NADH-quinone oxidoreductase subunit K (101 aa).

The next 3 membrane-spanning stretches (helical) occupy residues 4–24 (LAHFLVLGAILFAISIVGIFL), 30–50 (IVLLMAIELMLLAVNINFVAF), and 61–81 (VFVFFILTVAAAESAIGLAIL).

This sequence belongs to the complex I subunit 4L family. NDH-1 is composed of 14 different subunits. Subunits NuoA, H, J, K, L, M, N constitute the membrane sector of the complex.

The protein localises to the cell inner membrane. It catalyses the reaction a quinone + NADH + 5 H(+)(in) = a quinol + NAD(+) + 4 H(+)(out). In terms of biological role, NDH-1 shuttles electrons from NADH, via FMN and iron-sulfur (Fe-S) centers, to quinones in the respiratory chain. The immediate electron acceptor for the enzyme in this species is believed to be ubiquinone. Couples the redox reaction to proton translocation (for every two electrons transferred, four hydrogen ions are translocated across the cytoplasmic membrane), and thus conserves the redox energy in a proton gradient. This Cupriavidus taiwanensis (strain DSM 17343 / BCRC 17206 / CCUG 44338 / CIP 107171 / LMG 19424 / R1) (Ralstonia taiwanensis (strain LMG 19424)) protein is NADH-quinone oxidoreductase subunit K.